We begin with the raw amino-acid sequence, 357 residues long: Dual-specificity RNA methyltransferase RlmN (357 aa).

E89 functions as the Proton acceptor in the catalytic mechanism. A Radical SAM core domain is found at 109 to 340 (EGEKYTVCVS…CTIRESKALD (232 aa)). C116 and C345 are disulfide-bonded. Residues C123, C127, and C130 each contribute to the [4Fe-4S] cluster site. Residues 173–174 (GE), S203, 226–228 (SLH), and N302 contribute to the S-adenosyl-L-methionine site. C345 functions as the S-methylcysteine intermediate in the catalytic mechanism.

It belongs to the radical SAM superfamily. RlmN family. [4Fe-4S] cluster is required as a cofactor.

It is found in the cytoplasm. The enzyme catalyses adenosine(2503) in 23S rRNA + 2 reduced [2Fe-2S]-[ferredoxin] + 2 S-adenosyl-L-methionine = 2-methyladenosine(2503) in 23S rRNA + 5'-deoxyadenosine + L-methionine + 2 oxidized [2Fe-2S]-[ferredoxin] + S-adenosyl-L-homocysteine. It catalyses the reaction adenosine(37) in tRNA + 2 reduced [2Fe-2S]-[ferredoxin] + 2 S-adenosyl-L-methionine = 2-methyladenosine(37) in tRNA + 5'-deoxyadenosine + L-methionine + 2 oxidized [2Fe-2S]-[ferredoxin] + S-adenosyl-L-homocysteine. In terms of biological role, specifically methylates position 2 of adenine 2503 in 23S rRNA and position 2 of adenine 37 in tRNAs. m2A2503 modification seems to play a crucial role in the proofreading step occurring at the peptidyl transferase center and thus would serve to optimize ribosomal fidelity. This Helicobacter pylori (strain P12) protein is Dual-specificity RNA methyltransferase RlmN.